Reading from the N-terminus, the 243-residue chain is Small ribosomal subunit protein uS3 (243 aa).

A2 is subject to N-acetylalanine. S6 is subject to Phosphoserine; by PKC/PRKCD. The KH type-2 domain occupies 21–92; that stretch reads LNEFLTRELA…SVELYAEKVA (72 aa). At S35 the chain carries Phosphoserine. T42 is subject to Phosphothreonine; by MAPK. Position 62 is an N6-acetyllysine (K62). R64, R65, and R67 each carry asymmetric dimethylarginine; by PRMT1. The residue at position 70 (T70) is a Phosphothreonine; by PKB. A Glycyl lysine isopeptide (Lys-Gly) (interchain with G-Cter in ubiquitin) cross-link involves residue K90. S104 carries the phosphoserine modification. K132 bears the N6-succinyllysine mark. Residue K202 forms a Glycyl lysine isopeptide (Lys-Gly) (interchain with G-Cter in ubiquitin) linkage. Residue S209 is modified to Phosphoserine; by IKKB. Residue K214 forms a Glycyl lysine isopeptide (Lys-Gly) (interchain with G-Cter in SUMO2); alternate linkage. A Glycyl lysine isopeptide (Lys-Gly) (interchain with G-Cter in ubiquitin); alternate cross-link involves residue K214. The segment at 214–243 is disordered; sequence KDEILPTTPISEQKGGKPEPPAMPQPVPTA. T220 is modified (phosphothreonine). T221 bears the Phosphothreonine; by CDK1 and PKC/PRKCD mark. S224 is modified (phosphoserine). Residue K230 forms a Glycyl lysine isopeptide (Lys-Gly) (interchain with G-Cter in SUMO2) linkage. The segment covering 231–243 has biased composition (pro residues); it reads PEPPAMPQPVPTA. Phosphothreonine is present on T242.

Belongs to the universal ribosomal protein uS3 family. In terms of assembly, component of the 40S small ribosomal subunit. Identified in a IGF2BP1-dependent mRNP granule complex containing untranslated mRNAs. Interacts with HNRPD. Interacts with PRMT1; the interaction methylates RPS3. Interacts with SUMO1; the interaction sumoylates RPS3. Interacts with UBC9. Interacts with CDK1; the interaction phosphorylates RPS3. Interacts with PRKCD; the interaction phosphorylates RPS3. Interacts with PKB/AKT; the interaction phosphorylates RPS3. Interacts with E2F1; the interaction occurs in the absence of nerve growth factor and increases transcription of pro-apoptotic proteins BCL2L11/BIM and HRK/Dp5. Interacts with the base excision repair proteins APEX1 and OGG1; interaction with OGG1 increases OGG1 N-glycosylase activity. Interacts with UNG; the interaction increases the uracil excision activity of UNG1. Interacts with HSP90; the interaction prevents the ubiquitination and proteasome-dependent degradation of RPS3 and is suppressed by increased ROS levels. Interacts with TOM70; the interaction promotes translocation of RPS3 to the mitochondrion. Interacts (via N-terminus) with RELA (via N-terminus); the interaction enhances the DNA-binding activity of the NF-kappa-B p65-p50 complex. Interacts with NFKBIA; the interaction is direct and may bridge the interaction between RPS3 and RELA. Interacts with IKKB; the interaction phosphorylates RPS3 and enhances its translocation to the nucleus. Interacts (via KH domain) with MDM2 and TP53. Interacts with TRADD. Interacts with CRY1. Post-translationally, methylation by PRMT1 is required for import into the nucleolus and for ribosome assembly. In terms of processing, sumoylation by SUMO1 enhances protein stability through increased resistance to proteolysis. Sumoylation occurs at one or more of the three consensus sites, Lys-18, Lys-214 and Lys-230. Phosphorylation at Thr-221 by CDK1 occurs mainly in G2/M phase. Phosphorylation by PRKCD occurs on a non-ribosomal-associated form which results in translocation of RPS3 to the nucleus and enhances its endonuclease activity. Phosphorylated on Ser-209 by IKKB in response to activation of the NF-kappa-B p65-p50 complex which enhances the association of RPS3 with importin-alpha and mediates the nuclear translocation of RPS3. Phosphorylation by MAPK is required for translocation to the nucleus following exposure of cells to DNA damaging agents such as hydrogen peroxide. Phosphorylation by PKB/AKT mediates RPS3 nuclear translocation, enhances RPS3 endonuclease activity and suppresses RPS3-induced neuronal apoptosis. Post-translationally, ubiquitinated; ubiquitination is prevented by interaction with HSP90 which stabilizes the protein. Monoubiquitinated at Lys-214 by RNF10 and ZNF598 when a ribosome has stalled during translation of poly(A) sequences, leading to preclude synthesis of a long poly-lysine tail and initiate the ribosome quality control (RQC) pathway to degrade the potentially detrimental aberrant nascent polypeptide. Deubiquitinated at Lys-214 by USP10, preventing degradation by the proteasome and promoting 40S ribosome subunit recycling following ribosome dissociation. In terms of processing, ufmylated by UFL1.

The protein localises to the cytoplasm. It localises to the nucleus. It is found in the nucleolus. Its subcellular location is the mitochondrion inner membrane. The protein resides in the cytoskeleton. The protein localises to the spindle. It catalyses the reaction 2'-deoxyribonucleotide-(2'-deoxyribose 5'-phosphate)-2'-deoxyribonucleotide-DNA = a 3'-end 2'-deoxyribonucleotide-(2,3-dehydro-2,3-deoxyribose 5'-phosphate)-DNA + a 5'-end 5'-phospho-2'-deoxyribonucleoside-DNA + H(+). Its function is as follows. Component of the small ribosomal subunit. The ribosome is a large ribonucleoprotein complex responsible for the synthesis of proteins in the cell. Has endonuclease activity and plays a role in repair of damaged DNA. Cleaves phosphodiester bonds of DNAs containing altered bases with broad specificity and cleaves supercoiled DNA more efficiently than relaxed DNA. Displays high binding affinity for 7,8-dihydro-8-oxoguanine (8-oxoG), a common DNA lesion caused by reactive oxygen species (ROS). Has also been shown to bind with similar affinity to intact and damaged DNA. Stimulates the N-glycosylase activity of the base excision protein OGG1. Enhances the uracil excision activity of UNG1. Also stimulates the cleavage of the phosphodiester backbone by APEX1. When located in the mitochondrion, reduces cellular ROS levels and mitochondrial DNA damage. Has also been shown to negatively regulate DNA repair in cells exposed to hydrogen peroxide. Plays a role in regulating transcription as part of the NF-kappa-B p65-p50 complex where it binds to the RELA/p65 subunit, enhances binding of the complex to DNA and promotes transcription of target genes. Represses its own translation by binding to its cognate mRNA. Binds to and protects TP53/p53 from MDM2-mediated ubiquitination. Involved in spindle formation and chromosome movement during mitosis by regulating microtubule polymerization. Involved in induction of apoptosis through its role in activation of CASP8. Induces neuronal apoptosis by interacting with the E2F1 transcription factor and acting synergistically with it to up-regulate pro-apoptotic proteins BCL2L11/BIM and HRK/Dp5. Interacts with TRADD following exposure to UV radiation and induces apoptosis by caspase-dependent JNK activation. This Bos taurus (Bovine) protein is Small ribosomal subunit protein uS3 (RPS3).